Here is a 377-residue protein sequence, read N- to C-terminus: Palmitoyltransferase ZDHHC16 (377 aa).

Topologically, residues 1-77 (MRGQRSLLLG…VYWLVDNVIR (77 aa)) are cytoplasmic. Residues 78 to 98 (WFGVVFVVLVIVLTGSIVAIA) form a helical membrane-spanning segment. The Lumenal segment spans residues 99–116 (YLCVLPLILRTYSVPRLC). The chain crosses the membrane as a helical span at residues 117-137 (WHFFYSHWNLILIVFHYYQAI). Topologically, residues 138–198 (TTPPGYPPQG…NNCVGHYNHR (61 aa)) are cytoplasmic. The DHHC domain maps to 155 to 205 (SICKKCIYPKPARTHHCSICNRCVLKMDHHCPWLNNCVGHYNHRYFFSFCF). Cysteine 185 (S-palmitoyl cysteine intermediate) is an active-site residue. Residues 199 to 219 (YFFSFCFFMTLGCVYCSYGSW) traverse the membrane as a helical segment. Over 220 to 266 (DLFREAYAAIEKMKQLDKNKLQAVANQTYHQTPPPTFSFRERMTHKS) the chain is Lumenal. The chain crosses the membrane as a helical span at residues 267–287 (LVYLWFLCSSVALALGALTVW). Residues 288-377 (HAVLISRGET…TAHSASVMAV (90 aa)) lie on the Cytoplasmic side of the membrane.

This sequence belongs to the DHHC palmitoyltransferase family. As to quaternary structure, interacts with ABL1. Interacts with COPS5/JAB1. Widely expressed.

The protein resides in the endoplasmic reticulum membrane. The enzyme catalyses L-cysteinyl-[protein] + hexadecanoyl-CoA = S-hexadecanoyl-L-cysteinyl-[protein] + CoA. In terms of biological role, palmitoyl acyltransferase that mediates palmitoylation of proteins such as PLN and ZDHHC6. Required during embryonic heart development and cardiac function, possibly by mediating palmitoylation of PLN, thereby affecting PLN phosphorylation and homooligomerization. Also required for eye development. Palmitoylates ZDHHC6, affecting the quaternary assembly of ZDHHC6, its localization, stability and function. May play a role in DNA damage response. May be involved in apoptosis regulation. Involved in the proliferation of neural stem cells by regulating the FGF/ERK pathway. This Homo sapiens (Human) protein is Palmitoyltransferase ZDHHC16.